A 1291-amino-acid polypeptide reads, in one-letter code: GRB10-interacting GYF protein 2 (1291 aa).

Ala2 bears the N-acetylalanine mark. Ser19, Ser26, and Ser30 each carry phosphoserine. Omega-N-methylarginine occurs at positions 107, 119, and 121. Positions 112-132 are disordered; it reads GTVVGAPRGRSSSRGRGRGRG. Ser140 is subject to Phosphoserine. Disordered regions lie at residues 148-196, 209-248, and 267-484; these read FGRG…RKHE, REEQ…GWRE, and RGYR…TEPD. Arg150 bears the Omega-N-methylarginine mark. The span at 152–183 shows a compositional bias: basic and acidic residues; the sequence is GGREMHRSQSWEERGDRRFEKPGRKDVGRPNF. Phosphoserine occurs at positions 161, 190, and 237. Residues 226–248 are compositionally biased toward basic and acidic residues; it reads SRRDGERWRPHSPDGPRSTGWRE. The DDX6 binding motif signature appears at 281–311; sequence DDRDSLPEWCLEDAEEEMGTFDSSGAFLSLK. The span at 290-299 shows a compositional bias: acidic residues; sequence CLEDAEEEMG. The span at 313–364 shows a compositional bias: basic and acidic residues; sequence VQKEPIPEEQEMDFRPVEEGEERSDSDSSHNEEAKEPDKTNRREGEKTDRAG. Residues 371–393 show a composition bias toward polar residues; that stretch reads VPQTSLSSARPGTPSDHQPQEAT. Thr383 carries the post-translational modification Phosphothreonine. Residues 394-415 show a composition bias toward basic and acidic residues; sequence QFERKDEPKAEQVEKAEEENRS. The region spanning 534-582 is the GYF domain; sequence MQKWYYKDPQGEIQGPFNNQEMAEWFQAGYFTMSLLVKRACDESFQPLG. The segment at 548–564 is required for GRB10-binding; it reads GPFNNQEMAEWFQAGYF. Ser594 carries the post-translational modification Phosphoserine. Disordered stretches follow at residues 732-794, 846-937, 958-998, 1011-1053, and 1090-1118; these read KAKA…QEEA, EEAA…SNTA, ERQL…SKPA, EARQ…SVWG, and KEVG…NRQN. Positions 846 to 898 are enriched in basic and acidic residues; it reads EEAAKWAREEEEAQRRLEENRLRMEEEAARLRHEEEERKRKELELQRQKDLMR. Residues 899 to 924 are compositionally biased toward low complexity; that stretch reads QRQQQQEALRRLQQQQQQQQLAQMKL. Polar residues predominate over residues 925–937; it reads PSSSTWGQQSNTA. Residues 958 to 973 show a composition bias toward basic and acidic residues; sequence ERQLREEQRRQQRELM. Low complexity predominate over residues 977–986; that stretch reads QQQQQQQQQQ. Ser995 carries the post-translational modification Phosphoserine. Residues 1015-1031 show a composition bias toward low complexity; it reads MQKQQQQQQQQQQQHQQ. Residues 1032–1053 show a composition bias toward polar residues; that stretch reads SNRARNSTHSNLHTSLGNSVWG. Residues 1096 to 1110 show a composition bias toward low complexity; that stretch reads NSTNKNKNNASLSKS. Lys1129 is covalently cross-linked (Glycyl lysine isopeptide (Lys-Gly) (interchain with G-Cter in SUMO2)). 2 disordered regions span residues 1202-1223 and 1239-1263; these read AKQK…QDSV and QSNN…KMVR. The span at 1208-1220 shows a compositional bias: low complexity; it reads QQRQQQQQQQQQQ. Ser1276 is modified (phosphoserine).

The protein belongs to the GIGYF family. Component of the 4EHP-GYF2 complex, at least composed of EIF4E2, GIGYF2 and ZNF598. Interacts (via the 4EHP-binding motif) with EIF4E2; the interaction is direct. Interacts with ZFP36/TTP (via P-P-P-P-G repeats); the interaction is direct. Interacts with GRB10. Interacts (via DDX6 motif) with DDX6 (via RecA-like domain 2). As to expression, expressed in heart, liver, kidney and brain as well as in testis.

Its function is as follows. Key component of the 4EHP-GYF2 complex, a multiprotein complex that acts as a repressor of translation initiation. In the 4EHP-GYF2 complex, acts as a factor that bridges EIF4E2 to ZFP36/TTP, linking translation repression with mRNA decay. Also recruits and bridges the association of the 4EHP complex with the decapping effector protein DDX6, which is required for the ZFP36/TTP-mediated down-regulation of AU-rich mRNA. May act cooperatively with GRB10 to regulate tyrosine kinase receptor signaling, including IGF1 and insulin receptors. In association with EIF4E2, assists ribosome-associated quality control (RQC) by sequestering the mRNA cap, blocking ribosome initiation and decreasing the translational load on problematic messages. Part of a pathway that works in parallel to RQC-mediated degradation of the stalled nascent polypeptide. GIGYF2 and EIF4E2 work downstream and independently of ZNF598, which seems to work as a scaffold that can recruit them to faulty mRNA even if alternative recruitment mechanisms may exist. The polypeptide is GRB10-interacting GYF protein 2 (Mus musculus (Mouse)).